The primary structure comprises 172 residues: Translationally-controlled tumor protein homolog (172 aa).

The TCTP domain maps to 1–172 (MIIYKDTVTE…FKDGLISEKC (172 aa)).

Belongs to the TCTP family.

It is found in the cytoplasm. In terms of biological role, involved in calcium binding and microtubule stabilization. This chain is Translationally-controlled tumor protein homolog (tpt1), found in Xenopus tropicalis (Western clawed frog).